A 463-amino-acid chain; its full sequence is Argininosuccinate lyase (463 aa).

The protein belongs to the lyase 1 family. Argininosuccinate lyase subfamily.

Its subcellular location is the cytoplasm. The enzyme catalyses 2-(N(omega)-L-arginino)succinate = fumarate + L-arginine. It participates in amino-acid biosynthesis; L-arginine biosynthesis; L-arginine from L-ornithine and carbamoyl phosphate: step 3/3. In Prochlorococcus marinus (strain NATL2A), this protein is Argininosuccinate lyase.